Consider the following 235-residue polypeptide: 2-C-methyl-D-erythritol 4-phosphate cytidylyltransferase (235 aa).

The protein belongs to the IspD/TarI cytidylyltransferase family. IspD subfamily.

The enzyme catalyses 2-C-methyl-D-erythritol 4-phosphate + CTP + H(+) = 4-CDP-2-C-methyl-D-erythritol + diphosphate. It participates in isoprenoid biosynthesis; isopentenyl diphosphate biosynthesis via DXP pathway; isopentenyl diphosphate from 1-deoxy-D-xylulose 5-phosphate: step 2/6. Catalyzes the formation of 4-diphosphocytidyl-2-C-methyl-D-erythritol from CTP and 2-C-methyl-D-erythritol 4-phosphate (MEP). The chain is 2-C-methyl-D-erythritol 4-phosphate cytidylyltransferase from Leptospira borgpetersenii serovar Hardjo-bovis (strain L550).